We begin with the raw amino-acid sequence, 423 residues long: Serine--tRNA ligase (423 aa).

231–233 (TAE) is a binding site for L-serine. Residue 262-264 (RSE) coordinates ATP. Glu-285 contacts L-serine. Residue 349-352 (EISS) participates in ATP binding. Position 384 (Ser-384) interacts with L-serine.

This sequence belongs to the class-II aminoacyl-tRNA synthetase family. Type-1 seryl-tRNA synthetase subfamily. Homodimer. The tRNA molecule binds across the dimer.

Its subcellular location is the cytoplasm. It carries out the reaction tRNA(Ser) + L-serine + ATP = L-seryl-tRNA(Ser) + AMP + diphosphate + H(+). The enzyme catalyses tRNA(Sec) + L-serine + ATP = L-seryl-tRNA(Sec) + AMP + diphosphate + H(+). It functions in the pathway aminoacyl-tRNA biosynthesis; selenocysteinyl-tRNA(Sec) biosynthesis; L-seryl-tRNA(Sec) from L-serine and tRNA(Sec): step 1/1. Functionally, catalyzes the attachment of serine to tRNA(Ser). Is also able to aminoacylate tRNA(Sec) with serine, to form the misacylated tRNA L-seryl-tRNA(Sec), which will be further converted into selenocysteinyl-tRNA(Sec). This Lactococcus lactis subsp. cremoris (strain MG1363) protein is Serine--tRNA ligase.